The chain runs to 975 residues: Exportin-2 (975 aa).

Residues 29–105 (AEKLLESTEL…KTLIVTLMLH (77 aa)) form the Importin N-terminal domain.

This sequence belongs to the XPO2/CSE1 family. In terms of assembly, binds with high affinity to importin-alpha only in the presence of RanGTP.

It is found in the cytoplasm. Its subcellular location is the nucleus. Its function is as follows. Export receptor for importin alpha. Mediates importin-alpha re-export from the nucleus to the cytoplasm after import substrates have been released into the nucleoplasm. This Drosophila melanogaster (Fruit fly) protein is Exportin-2.